The following is a 76-amino-acid chain: Neuromacin-like protein (76 aa).

Disulfide bonds link Cys18/Cys25, Cys40/Cys44, Cys54/Cys61, and Cys72/Cys74.

Belongs to the macin family.

It is found in the secreted. This is Neuromacin-like protein from Aplysia californica (California sea hare).